We begin with the raw amino-acid sequence, 525 residues long: Delta(24)-sterol reductase homolog dhcr-24 (525 aa).

2 consecutive transmembrane segments (helical) span residues 27-47 (WVFV…VFDF) and 214-234 (SLFF…AATI). Residues 47-239 (FRNRIVHAVN…VAATIKIIPC (193 aa)) form the FAD-binding PCMH-type domain.

The protein belongs to the FAD-binding oxidoreductase/transferase type 4 family. FAD serves as cofactor.

It localises to the endoplasmic reticulum membrane. Its subcellular location is the golgi apparatus membrane. It carries out the reaction cholesterol + NADP(+) = desmosterol + NADPH + H(+). The enzyme catalyses lanosterol + NADPH + H(+) = 24,25-dihydrolanosterol + NADP(+). The catalysed reaction is 5alpha-cholest-8-en-3beta-ol + NADP(+) = zymosterol + NADPH + H(+). It functions in the pathway steroid biosynthesis; cholesterol biosynthesis. In terms of biological role, catalyzes the reduction of the delta-24 double bond of sterol intermediates during cholesterol biosynthesis. This Caenorhabditis elegans protein is Delta(24)-sterol reductase homolog dhcr-24.